The sequence spans 335 residues: Probable deoxyhypusine synthase (335 aa).

The active-site Nucleophile is K307.

Belongs to the deoxyhypusine synthase family. Requires NAD(+) as cofactor.

It carries out the reaction [eIF5A protein]-L-lysine + spermidine = [eIF5A protein]-deoxyhypusine + propane-1,3-diamine. The protein operates within protein modification; eIF5A hypusination. Its function is as follows. Catalyzes the NAD-dependent oxidative cleavage of spermidine and the subsequent transfer of the butylamine moiety of spermidine to the epsilon-amino group of a specific lysine residue of the eIF-5A precursor protein to form the intermediate deoxyhypusine residue. This is Probable deoxyhypusine synthase (dys) from Pyrococcus abyssi (strain GE5 / Orsay).